The sequence spans 291 residues: Homoserine kinase (291 aa).

80–90 provides a ligand contact to ATP; sequence RPSSGLGSSAA.

The protein belongs to the GHMP kinase family. Homoserine kinase subfamily.

It localises to the cytoplasm. The catalysed reaction is L-homoserine + ATP = O-phospho-L-homoserine + ADP + H(+). It functions in the pathway amino-acid biosynthesis; L-threonine biosynthesis; L-threonine from L-aspartate: step 4/5. In terms of biological role, catalyzes the ATP-dependent phosphorylation of L-homoserine to L-homoserine phosphate. The polypeptide is Homoserine kinase (Haloquadratum walsbyi (strain DSM 16790 / HBSQ001)).